Here is a 43-residue protein sequence, read N- to C-terminus: Bacteriocin weissellin-A (43 aa).

A disulfide bridge links cysteine 9 with cysteine 14.

The protein localises to the secreted. Its function is as follows. Highly active against Gram-positive bacteria M.flavus strain ATCC 400, M.luteus strain CECT241, C.soprogenes strain NCTC533, L.monocytogenes strain ATCC 19111, L.inocua strain ATCC BAA-680D and S.carnosus strain LMG13564. Less active against B.cereus strain LMG13569, C.thiaminolyticum strain ATCC 15579, E.faecalis strain NCTC8176, L.lactis strain LM0230, L.casei strain ATCC 344, L.lactis strain IL1403, L.jensenii strain ATCC 25258, L.plantarum strain CECT220, L.brevis strain ATCC 8287, L.bulgaricus strain LMG13551, P.acidilactici strain ATCC 25740, P.pentosaceus strain ATCC 33316 and P.pentosaceus strain LMG13560. Weakly active against L.mesenteroides strain ATCC 19254, L.lactis strain ATCC 1454, L.sakei strain CECT906T, L.lactis subsp. cremoris strain MC1363 and L.curvatus strain ATCC 51436. Not active against Gram-negative bacterium S.enteritidis strain ATCC 13076. The mode of action appears to be non-lytic. Inactivated by proteinase K, but insensitive to trypsin, alpha-chymotrypsin, pepsin and papain. The sequence is that of Bacteriocin weissellin-A from Weissella paramesenteroides (Leuconostoc paramesenteroides).